An 894-amino-acid chain; its full sequence is ABC-transporter-regulating transcription factor (894 aa).

The segment at residues 71 to 98 (CDMCRKKKIKCDGKMPKCSHCINYRTDC) is a DNA-binding region (zn(2)-C6 fungal-type). Over residues 159–174 (NTALNSLKSPTNKFNG) the composition is skewed to polar residues. Positions 159-219 (NTALNSLKSP…PKESETEVEG (61 aa)) are disordered. Positions 175–189 (SSATSQSQHTTASRH) are enriched in low complexity. The segment covering 199–210 (SPHTAATSPNSP) has biased composition (polar residues). The chain crosses the membrane as a helical span at residues 649 to 669 (CVWLILYYPVSALVTLFANIL). The segment at 724–797 (AEKESHSKKK…MSNPTRAFAP (74 aa)) is disordered. The span at 736–750 (AAPDEPQDLRQKTPD) shows a compositional bias: basic and acidic residues. Composition is skewed to polar residues over residues 751–761 (ENSVPSPSTKR) and 771–792 (LFPS…SNPT).

Its subcellular location is the nucleus. It localises to the membrane. In terms of biological role, transcription factor that regulates expression of the genes related to resistance to azole compounds. The sequence is that of ABC-transporter-regulating transcription factor from Aspergillus oryzae (strain ATCC 42149 / RIB 40) (Yellow koji mold).